The sequence spans 172 residues: Protein LOL2 (172 aa).

3 putative zinc finger regions span residues 4–34 (QIVCHGCRNILLYPRGAPSVCCAVCHAVSST), 44–74 (HLICGGCRTLLMYTRNATSVRCSCCDTVNLV), and 82–112 (HLNCGQCQTVLMYPYGAPSVKCAICNFITNT).

Its subcellular location is the nucleus. Putative zinc finger that may be involved in programmed cell death and defense response. In Oryza sativa subsp. japonica (Rice), this protein is Protein LOL2 (LOL2).